Here is a 355-residue protein sequence, read N- to C-terminus: Myosin-binding protein H-like (355 aa).

2 stretches are compositionally biased toward polar residues: residues 1–16 (META…SQRQ) and 31–41 (TSHQQEAGSPS). The tract at residues 1-41 (METATTLEIASCSQRQVEAAADPADAKGPRTSHQQEAGSPS) is disordered. Ser-39 carries the post-translational modification Phosphoserine. The region spanning 46 to 140 (PSIEEHPKIW…GGLQATATIN (95 aa)) is the Ig-like C2-type 1 domain. Residues 149-244 (PPQSIKLVDV…TADLAHIQKA (96 aa)) enclose the Fibronectin type-III domain. The Ig-like C2-type 2 domain occupies 262–346 (PKFTQPLADC…INALGEASVD (85 aa)). Cys-283 and Cys-334 are joined by a disulfide. The residue at position 322 (Arg-322) is an Omega-N-methylarginine.

The protein belongs to the immunoglobulin superfamily. MyBP family. In terms of tissue distribution, expressed in the atria as well as in discrete puncta throughout the right ventricular wall and septum.

It is found in the cytoplasm. The protein localises to the myofibril. It localises to the sarcomere. Myosin-binding protein which plays a role in cardiac function. Seems to regulate conduction in the atria and ventricular conduction systems. This Mus musculus (Mouse) protein is Myosin-binding protein H-like.